A 343-amino-acid polypeptide reads, in one-letter code: Cytoplasmic tRNA 2-thiolation protein 1 (343 aa).

Belongs to the TtcA family. CTU1/NCS6/ATPBD3 subfamily.

Its subcellular location is the cytoplasm. It participates in tRNA modification; 5-methoxycarbonylmethyl-2-thiouridine-tRNA biosynthesis. In terms of biological role, plays a central role in 2-thiolation of mcm(5)S(2)U at tRNA wobble positions of tRNA(Lys), tRNA(Glu) and tRNA(Gln). Directly binds tRNAs and probably acts by catalyzing adenylation of tRNAs, an intermediate required for 2-thiolation. It is unclear whether it acts as a sulfurtransferase that transfers sulfur from thiocarboxylated URM1 onto the uridine of tRNAs at wobble position. This chain is Cytoplasmic tRNA 2-thiolation protein 1, found in Drosophila sechellia (Fruit fly).